A 1175-amino-acid chain; its full sequence is uncharacterized protein (1175 aa).

An ATP-binding site is contributed by 586–593 (GPAGTGKT).

This is an uncharacterized protein from Methanocaldococcus jannaschii (strain ATCC 43067 / DSM 2661 / JAL-1 / JCM 10045 / NBRC 100440) (Methanococcus jannaschii).